A 461-amino-acid polypeptide reads, in one-letter code: D-phenylhydantoinase (461 aa).

His59, His61, and Lys151 together coordinate a divalent metal cation. Residue Lys151 is modified to N6-carboxylysine. Tyr156 provides a ligand contact to substrate. A divalent metal cation-binding residues include His182 and His239. Ser286 is a binding site for substrate. Asp313 lines the a divalent metal cation pocket. Residue Asn335 coordinates substrate.

It belongs to the metallo-dependent hydrolases superfamily. Hydantoinase/dihydropyrimidinase family. As to quaternary structure, homotetramer. A divalent metal cation is required as a cofactor. Carboxylation allows a single lysine to coordinate two divalent metal cations.

It catalyses the reaction D-5-phenylhydantoin + H2O = N-carbamoyl-D-phenylglycine + H(+). Catalyzes the stereospecific hydrolysis of the cyclic amide bond of D-hydantoin derivatives with an aromatic side chains at the 5'-position. Has no activity on dihydropyrimidines. The physiological function is unknown. In Escherichia coli O6:K15:H31 (strain 536 / UPEC), this protein is D-phenylhydantoinase.